The sequence spans 97 residues: ESAT-6-like protein EsxG (97 aa).

N-acetylserine is present on Ser-2.

Belongs to the WXG100 family. CFP-10 subfamily. In terms of assembly, forms a tight 1:1 complex with EsxH.

It is found in the secreted. Its function is as follows. EsxG, in complex with EsxH, disrupts ESCRT function and impairs host phagosome maturation, thereby promoting intracellular bacterial growth. The complex acts by interacting, via EsxH, with the host hepatocyte growth factor-regulated tyrosine kinase substrate (HGS/HRS), a component of the ESCRT machinery. EsxG stabilizes EsxH in the host cytosol. The protein is ESAT-6-like protein EsxG of Mycobacterium tuberculosis (strain ATCC 25618 / H37Rv).